A 2200-amino-acid polypeptide reads, in one-letter code: Tyrosine-protein phosphatase Lar-like (2200 aa).

The N-terminal stretch at 1-42 (MIQFRNKNNSMNRIARHLRNVARRKGSSLLLFLMLSTVLVAA) is a signal peptide. Residues N8 and N116 are each glycosylated (N-linked (GlcNAc...) asparagine). At 43–1497 (KEDDPARLVV…LRGASQKSSP (1455 aa)) the chain is on the extracellular side. Ig-like C2-type domains lie at 47–139 (PARL…ASLT), 151–240 (PQIE…KAAN), and 250–334 (PYFS…TTVI). 2 disulfides stabilise this stretch: C69–C122 and C172–C225. Residues N269 and N315 are each glycosylated (N-linked (GlcNAc...) asparagine). The cysteines at positions 272 and 318 are disulfide-linked. Fibronectin type-III domains are found at residues 341–434 (PPVN…TKPS), 439–535 (APVS…TRQG), 539–628 (QPPM…TIAS), 633–748 (SPTI…TLED), 752–856 (APRN…IPPE), 857–956 (APEI…PVGS), 957–1053 (PDGE…PDPA), 1058–1158 (PPTN…NYMT), and 1181–1287 (MVQN…TGPP). The N-linked (GlcNAc...) asparagine glycan is linked to N574. Residues N945, N988, N1069, N1141, N1212, and N1330 are each glycosylated (N-linked (GlcNAc...) asparagine). A disordered region spans residues 1355 to 1392 (LARSLSVSPSKKLKRKASEVGDDSQSASYHPKEKRARR). The helical transmembrane segment at 1498–1518 (WVGACIAFLVLFSIVGMLICW) threads the bilayer. Residues 1519–2200 (WLRCNKKSAG…EYLAAYDNFS (682 aa)) lie on the Cytoplasmic side of the membrane. 2 Tyrosine-protein phosphatase domains span residues 1647 to 1902 (FQSE…VLDA) and 1933 to 2192 (IDME…AYEY). Substrate contacts are provided by residues D1811, 1843–1849 (CSAGIGR), and Q1887. The active-site Phosphocysteine intermediate is C1843. The Phosphocysteine intermediate role is filled by C2133.

The protein belongs to the protein-tyrosine phosphatase family. Receptor class 2A subfamily. Both isoforms are ubiquitously expressed in early embryos. In later embryos, larvae and adults expression is highest in the nerve ring, dorsal cord, ventral cord and epithelial tissues.

The protein resides in the cell junction. It is found in the adherens junction. Its subcellular location is the cell membrane. The enzyme catalyses O-phospho-L-tyrosyl-[protein] + H2O = L-tyrosyl-[protein] + phosphate. Has a role in early neural and epidermal development; neuroblast movements during closure of the gastrulation cleft and epidermal morphogenesis. Vab-1 and ptp-3 may function redundantly within the same sets of neuronal precursors. This chain is Tyrosine-protein phosphatase Lar-like (ptp-3), found in Caenorhabditis elegans.